Reading from the N-terminus, the 195-residue chain is Protein GrpE (195 aa).

Polar residues predominate over residues 1–24 (MSSKEQNTPDEQVSQESEMEQGQQ). The tract at residues 1 to 40 (MSSKEQNTPDEQVSQESEMEQGQQAEAAPETVDVVDPRDE) is disordered.

This sequence belongs to the GrpE family. As to quaternary structure, homodimer.

The protein localises to the cytoplasm. Participates actively in the response to hyperosmotic and heat shock by preventing the aggregation of stress-denatured proteins, in association with DnaK and GrpE. It is the nucleotide exchange factor for DnaK and may function as a thermosensor. Unfolded proteins bind initially to DnaJ; upon interaction with the DnaJ-bound protein, DnaK hydrolyzes its bound ATP, resulting in the formation of a stable complex. GrpE releases ADP from DnaK; ATP binding to DnaK triggers the release of the substrate protein, thus completing the reaction cycle. Several rounds of ATP-dependent interactions between DnaJ, DnaK and GrpE are required for fully efficient folding. This chain is Protein GrpE, found in Sodalis glossinidius (strain morsitans).